The following is a 31-amino-acid chain: MPTLTSYFGFLLAALTITSVLFIGLNKIRLI.

A helical membrane pass occupies residues leucine 4 to glycine 24.

It belongs to the PetL family. In terms of assembly, the 4 large subunits of the cytochrome b6-f complex are cytochrome b6, subunit IV (17 kDa polypeptide, PetD), cytochrome f and the Rieske protein, while the 4 small subunits are PetG, PetL, PetM and PetN. The complex functions as a dimer.

The protein localises to the plastid. The protein resides in the chloroplast thylakoid membrane. Functionally, component of the cytochrome b6-f complex, which mediates electron transfer between photosystem II (PSII) and photosystem I (PSI), cyclic electron flow around PSI, and state transitions. PetL is important for photoautotrophic growth as well as for electron transfer efficiency and stability of the cytochrome b6-f complex. In Silene conica (Striped corn catchfly), this protein is Cytochrome b6-f complex subunit 6.